The sequence spans 466 residues: Methylenetetrahydrofolate--tRNA-(uracil-5-)-methyltransferase TrmFO (466 aa).

12 to 17 serves as a coordination point for FAD; the sequence is GAGLAG.

The protein belongs to the MnmG family. TrmFO subfamily. FAD is required as a cofactor.

The protein resides in the cytoplasm. The enzyme catalyses uridine(54) in tRNA + (6R)-5,10-methylene-5,6,7,8-tetrahydrofolate + NADH + H(+) = 5-methyluridine(54) in tRNA + (6S)-5,6,7,8-tetrahydrofolate + NAD(+). It catalyses the reaction uridine(54) in tRNA + (6R)-5,10-methylene-5,6,7,8-tetrahydrofolate + NADPH + H(+) = 5-methyluridine(54) in tRNA + (6S)-5,6,7,8-tetrahydrofolate + NADP(+). Its function is as follows. Catalyzes the folate-dependent formation of 5-methyl-uridine at position 54 (M-5-U54) in all tRNAs. The sequence is that of Methylenetetrahydrofolate--tRNA-(uracil-5-)-methyltransferase TrmFO from Synechococcus elongatus (strain ATCC 33912 / PCC 7942 / FACHB-805) (Anacystis nidulans R2).